A 287-amino-acid polypeptide reads, in one-letter code: Protease HtpX (287 aa).

2 helical membrane passes run 4-24 and 36-56; these read VMLF…VLNI and LSGL…ISLM. A Zn(2+)-binding site is contributed by H143. E144 is a catalytic residue. Position 147 (H147) interacts with Zn(2+). Helical transmembrane passes span 158–178 and 192–212; these read LMQG…ANIV and MVYF…ASFI. E221 provides a ligand contact to Zn(2+).

This sequence belongs to the peptidase M48B family. The cofactor is Zn(2+).

It localises to the cell inner membrane. This Vibrio atlanticus (strain LGP32) (Vibrio splendidus (strain Mel32)) protein is Protease HtpX.